Consider the following 365-residue polypeptide: TD and POZ domain-containing protein 1 (365 aa).

An MATH domain is found at 19-149 (KFCYKWTISN…EDQLTICCKV (131 aa)). Residues 188–250 (TDCCLLVAGH…EMMGFIYTGK (63 aa)) form the BTB domain.

This sequence belongs to the Tdpoz family.

The chain is TD and POZ domain-containing protein 1 from Mus musculus (Mouse).